The sequence spans 254 residues: Large ribosomal subunit protein uL4 (254 aa).

This sequence belongs to the universal ribosomal protein uL4 family. In terms of assembly, part of the 50S ribosomal subunit.

Its function is as follows. One of the primary rRNA binding proteins, this protein initially binds near the 5'-end of the 23S rRNA. It is important during the early stages of 50S assembly. It makes multiple contacts with different domains of the 23S rRNA in the assembled 50S subunit and ribosome. Functionally, forms part of the polypeptide exit tunnel. The sequence is that of Large ribosomal subunit protein uL4 from Methanothermobacter thermautotrophicus (strain ATCC 29096 / DSM 1053 / JCM 10044 / NBRC 100330 / Delta H) (Methanobacterium thermoautotrophicum).